A 580-amino-acid polypeptide reads, in one-letter code: tRNA-guanine(15) transglycosylase (580 aa).

Residue aspartate 91 is the Nucleophile of the active site. Substrate-binding residues include aspartate 126 and alanine 192. Zn(2+)-binding residues include cysteine 275, cysteine 277, and cysteine 280. The 76-residue stretch at 504 to 579 (RMRVVVDEDA…LAVKVRRGVE (76 aa)) folds into the PUA domain.

This sequence belongs to the archaeosine tRNA-ribosyltransferase family. The cofactor is Zn(2+).

The catalysed reaction is guanosine(15) in tRNA + 7-cyano-7-deazaguanine = 7-cyano-7-carbaguanosine(15) in tRNA + guanine. It participates in tRNA modification; archaeosine-tRNA biosynthesis. Its function is as follows. Exchanges the guanine residue with 7-cyano-7-deazaguanine (preQ0) at position 15 in the dihydrouridine loop (D-loop) of archaeal tRNAs. The protein is tRNA-guanine(15) transglycosylase of Thermococcus onnurineus (strain NA1).